We begin with the raw amino-acid sequence, 343 residues long: DNA repair and recombination protein RadA (343 aa).

An ATP-binding site is contributed by 107 to 114 (GEFGAGKS).

This sequence belongs to the eukaryotic RecA-like protein family.

In terms of biological role, involved in DNA repair and in homologous recombination. Binds and assemble on single-stranded DNA to form a nucleoprotein filament. Hydrolyzes ATP in a ssDNA-dependent manner and promotes DNA strand exchange between homologous DNA molecules. The sequence is that of DNA repair and recombination protein RadA from Haloquadratum walsbyi (strain DSM 16790 / HBSQ001).